Here is a 192-residue protein sequence, read N- to C-terminus: Signal peptidase complex catalytic subunit SEC11C (192 aa).

Over methionine 1 to arginine 28 the chain is Cytoplasmic. A helical; Signal-anchor for type II membrane protein transmembrane segment spans residues glutamine 29–tryptophan 48. At lysine 49–serine 192 the chain is on the lumenal side. Residues serine 68, histidine 108, and aspartate 134 each act as charge relay system in the active site. The C-terminal short (CTS) helix stretch occupies residues alanine 177–leucine 188.

This sequence belongs to the peptidase S26B family. Component of the signal peptidase complex paralog C (SPC-C) composed of a catalytic subunit SEC11C and three accessory subunits SPCS1, SPCS2 and SPCS3. Within the complex, interacts with SPCS2 and SPCS3. The complex induces a local thinning of the ER membrane which is used to measure the length of the signal peptide (SP) h-region of protein substrates. This ensures the selectivity of the complex towards h-regions shorter than 18-20 amino acids. In terms of processing, may undergo processing at the N-terminus.

Its subcellular location is the endoplasmic reticulum membrane. The catalysed reaction is Cleavage of hydrophobic, N-terminal signal or leader sequences from secreted and periplasmic proteins.. Its function is as follows. Catalytic component of the signal peptidase complex (SPC) which catalyzes the cleavage of N-terminal signal sequences from nascent proteins as they are translocated into the lumen of the endoplasmic reticulum. Specifically cleaves N-terminal signal peptides that contain a hydrophobic alpha-helix (h-region) shorter than 18-20 amino acids. This Rattus norvegicus (Rat) protein is Signal peptidase complex catalytic subunit SEC11C (Sec11c).